Here is a 436-residue protein sequence, read N- to C-terminus: Methanethiol oxidase (436 aa).

The N-terminal stretch at M1 to A24 is a signal peptide.

This sequence belongs to the selenium-binding protein family.

Its subcellular location is the periplasm. It catalyses the reaction methanethiol + O2 + H2O = hydrogen sulfide + formaldehyde + H2O2 + H(+). Its pathway is organosulfur degradation. Catalyzes the oxidation of methanethiol. The polypeptide is Methanethiol oxidase (Ruegeria pomeroyi (strain ATCC 700808 / DSM 15171 / DSS-3) (Silicibacter pomeroyi)).